A 179-amino-acid polypeptide reads, in one-letter code: Large ribosomal subunit protein uL6 (179 aa).

This sequence belongs to the universal ribosomal protein uL6 family. In terms of assembly, part of the 50S ribosomal subunit.

In terms of biological role, this protein binds to the 23S rRNA, and is important in its secondary structure. It is located near the subunit interface in the base of the L7/L12 stalk, and near the tRNA binding site of the peptidyltransferase center. In Mycoplasmopsis pulmonis (strain UAB CTIP) (Mycoplasma pulmonis), this protein is Large ribosomal subunit protein uL6.